Here is a 119-residue protein sequence, read N- to C-terminus: Ribonuclease P protein component (119 aa).

Belongs to the RnpA family. As to quaternary structure, consists of a catalytic RNA component (M1 or rnpB) and a protein subunit.

It catalyses the reaction Endonucleolytic cleavage of RNA, removing 5'-extranucleotides from tRNA precursor.. Its function is as follows. RNaseP catalyzes the removal of the 5'-leader sequence from pre-tRNA to produce the mature 5'-terminus. It can also cleave other RNA substrates such as 4.5S RNA. The protein component plays an auxiliary but essential role in vivo by binding to the 5'-leader sequence and broadening the substrate specificity of the ribozyme. The polypeptide is Ribonuclease P protein component (Yersinia enterocolitica serotype O:8 / biotype 1B (strain NCTC 13174 / 8081)).